We begin with the raw amino-acid sequence, 37 residues long: Large ribosomal subunit protein bL36c (37 aa).

Belongs to the bacterial ribosomal protein bL36 family.

It localises to the plastid. It is found in the chloroplast. This chain is Large ribosomal subunit protein bL36c (rpl36), found in Nephroselmis olivacea (Green alga).